The following is a 306-amino-acid chain: Pantothenate kinase (306 aa).

91-98 contacts ATP; it reads GSVAVGKS.

It belongs to the prokaryotic pantothenate kinase family.

Its subcellular location is the cytoplasm. It catalyses the reaction (R)-pantothenate + ATP = (R)-4'-phosphopantothenate + ADP + H(+). It participates in cofactor biosynthesis; coenzyme A biosynthesis; CoA from (R)-pantothenate: step 1/5. This chain is Pantothenate kinase, found in Streptococcus gordonii (strain Challis / ATCC 35105 / BCRC 15272 / CH1 / DL1 / V288).